Reading from the N-terminus, the 408-residue chain is Tyrosine--tRNA ligase (408 aa).

A 'HIGH' region motif is present at residues 46–55; the sequence is PTAPDLHVGH. A 'KMSKS' region motif is present at residues 230-234; that stretch reads KMSKS. ATP is bound at residue K233. The 62-residue stretch at 343 to 404 folds into the S4 RNA-binding domain; it reads VWICRLLTDA…GKRRFARIKF (62 aa).

The protein belongs to the class-I aminoacyl-tRNA synthetase family. TyrS type 2 subfamily. In terms of assembly, homodimer.

It localises to the cytoplasm. The catalysed reaction is tRNA(Tyr) + L-tyrosine + ATP = L-tyrosyl-tRNA(Tyr) + AMP + diphosphate + H(+). Catalyzes the attachment of tyrosine to tRNA(Tyr) in a two-step reaction: tyrosine is first activated by ATP to form Tyr-AMP and then transferred to the acceptor end of tRNA(Tyr). The polypeptide is Tyrosine--tRNA ligase (Syntrophotalea carbinolica (strain DSM 2380 / NBRC 103641 / GraBd1) (Pelobacter carbinolicus)).